A 193-amino-acid chain; its full sequence is Peptidyl-tRNA hydrolase (193 aa).

A tRNA-binding site is contributed by tyrosine 16. Catalysis depends on histidine 21, which acts as the Proton acceptor. Positions 66, 68, and 114 each coordinate tRNA.

Belongs to the PTH family. As to quaternary structure, monomer.

The protein resides in the cytoplasm. It catalyses the reaction an N-acyl-L-alpha-aminoacyl-tRNA + H2O = an N-acyl-L-amino acid + a tRNA + H(+). In terms of biological role, hydrolyzes ribosome-free peptidyl-tRNAs (with 1 or more amino acids incorporated), which drop off the ribosome during protein synthesis, or as a result of ribosome stalling. Catalyzes the release of premature peptidyl moieties from peptidyl-tRNA molecules trapped in stalled 50S ribosomal subunits, and thus maintains levels of free tRNAs and 50S ribosomes. In Trichlorobacter lovleyi (strain ATCC BAA-1151 / DSM 17278 / SZ) (Geobacter lovleyi), this protein is Peptidyl-tRNA hydrolase.